Consider the following 223-residue polypeptide: Small ribosomal subunit protein uS3 (223 aa).

The KH type-2 domain occupies 39–117 (IREHLRKKPS…RPELNAKLVA (79 aa)).

It belongs to the universal ribosomal protein uS3 family. As to quaternary structure, part of the 30S ribosomal subunit. Forms a tight complex with proteins S10 and S14.

In terms of biological role, binds the lower part of the 30S subunit head. Binds mRNA in the 70S ribosome, positioning it for translation. This Chlamydia caviae (strain ATCC VR-813 / DSM 19441 / 03DC25 / GPIC) (Chlamydophila caviae) protein is Small ribosomal subunit protein uS3.